Consider the following 104-residue polypeptide: Large ribosomal subunit protein bL21 (104 aa).

It belongs to the bacterial ribosomal protein bL21 family. In terms of assembly, part of the 50S ribosomal subunit. Contacts protein L20.

Functionally, this protein binds to 23S rRNA in the presence of protein L20. This Elusimicrobium minutum (strain Pei191) protein is Large ribosomal subunit protein bL21.